A 277-amino-acid chain; its full sequence is 2-dehydro-3-deoxyphosphooctonate aldolase (277 aa).

This sequence belongs to the KdsA family.

Its subcellular location is the cytoplasm. The enzyme catalyses D-arabinose 5-phosphate + phosphoenolpyruvate + H2O = 3-deoxy-alpha-D-manno-2-octulosonate-8-phosphate + phosphate. The protein operates within carbohydrate biosynthesis; 3-deoxy-D-manno-octulosonate biosynthesis; 3-deoxy-D-manno-octulosonate from D-ribulose 5-phosphate: step 2/3. Its pathway is bacterial outer membrane biogenesis; lipopolysaccharide biosynthesis. The polypeptide is 2-dehydro-3-deoxyphosphooctonate aldolase (Dichelobacter nodosus (strain VCS1703A)).